We begin with the raw amino-acid sequence, 123 residues long: Thioredoxin H-type (123 aa).

In terms of domain architecture, Thioredoxin spans 2-119 (AATAELIPAG…IEAKLLKHSQ (118 aa)). The cysteines at positions 45 and 48 are disulfide-linked.

The protein belongs to the thioredoxin family. Plant H-type subfamily.

Its subcellular location is the cytoplasm. In terms of biological role, participates in various redox reactions through the reversible oxidation of the active center dithiol to a disulfide. The H form is known to activate a number of cytosolic enzymes. In Brassica campestris (Field mustard), this protein is Thioredoxin H-type (PEC-2).